The following is a 91-amino-acid chain: DNA-directed RNA polymerase subunit omega (91 aa).

It belongs to the RNA polymerase subunit omega family. The RNAP catalytic core consists of 2 alpha, 1 beta, 1 beta' and 1 omega subunit. When a sigma factor is associated with the core the holoenzyme is formed, which can initiate transcription.

The catalysed reaction is RNA(n) + a ribonucleoside 5'-triphosphate = RNA(n+1) + diphosphate. Promotes RNA polymerase assembly. Latches the N- and C-terminal regions of the beta' subunit thereby facilitating its interaction with the beta and alpha subunits. This chain is DNA-directed RNA polymerase subunit omega, found in Nocardia farcinica (strain IFM 10152).